A 310-amino-acid polypeptide reads, in one-letter code: Integrin-binding sialoprotein (310 aa).

The N-terminal stretch at 1 to 16 (MKTVLILLSILGMACA) is a signal peptide. 7 positions are modified to phosphoserine: serine 31, serine 62, serine 67, serine 75, serine 76, serine 98, and serine 106. The segment at 61–284 (QSSSDSSEEN…NGDPRGDNYR (224 aa)) is disordered. The span at 62 to 74 (SSSDSSEENGNGD) shows a compositional bias: low complexity. 2 stretches are compositionally biased toward acidic residues: residues 75 to 87 (SSEE…ETSN) and 96 to 108 (EDSD…ESEA). N-linked (GlcNAc...) asparagine glycosylation is present at asparagine 110. Threonine 144 bears the Phosphothreonine mark. Over residues 152–174 (DESDEEEEEEEEEENEAEVDDNE) the composition is skewed to acidic residues. A Phosphoserine modification is found at serine 154. A compositionally biased stretch (polar residues) spans 175–187 (QGINGTSSNSTEV). N-linked (GlcNAc...) asparagine glycans are attached at residues asparagine 178 and asparagine 183. The segment covering 198–208 (NGEEDGEEESV) has biased composition (acidic residues). The span at 209–227 (TEANTEGITVAGETTTSPN) shows a compositional bias: polar residues. Position 273 is a phosphoserine (serine 273). An Integrin-binding motif motif is present at residues 279-281 (RGD). Serine 300 is modified (phosphoserine). A sulfotyrosine mark is found at tyrosine 306 and tyrosine 307.

Monomer. Interacts with integrins; the interaction promotes cell adhesion.

The protein localises to the secreted. In terms of biological role, binds tightly to hydroxyapatite. Appears to form an integral part of the mineralized matrix. Probably important to cell-matrix interaction. Promotes adhesion and migration of various cells via the alpha-V/beta-3 integrin receptor (ITGAV:ITGB3). The protein is Integrin-binding sialoprotein (IBSP) of Bos taurus (Bovine).